The sequence spans 72 residues: DNA-directed RNA polymerase subunit omega (72 aa).

Belongs to the RNA polymerase subunit omega family. As to quaternary structure, the RNAP catalytic core consists of 2 alpha, 1 beta, 1 beta' and 1 omega subunit. When a sigma factor is associated with the core the holoenzyme is formed, which can initiate transcription.

It carries out the reaction RNA(n) + a ribonucleoside 5'-triphosphate = RNA(n+1) + diphosphate. Functionally, promotes RNA polymerase assembly. Latches the N- and C-terminal regions of the beta' subunit thereby facilitating its interaction with the beta and alpha subunits. The chain is DNA-directed RNA polymerase subunit omega from Francisella tularensis subsp. tularensis (strain FSC 198).